We begin with the raw amino-acid sequence, 109 residues long: Small ribosomal subunit protein bS6 (109 aa).

The protein belongs to the bacterial ribosomal protein bS6 family.

Its function is as follows. Binds together with bS18 to 16S ribosomal RNA. This Dehalococcoides mccartyi (strain CBDB1) protein is Small ribosomal subunit protein bS6.